A 257-amino-acid polypeptide reads, in one-letter code: MAQQLSESDSGWWVVSDRGRIWLPEGELPYGSAAQWHLVGKMAYRIGEWQGMPVWLLCLTYPQDMASVRQLIDADRGLFQLAGRGVQLAEFFQSHRFCGYCGHPMHAGQQEWVRLCAHCQQRYYPQIAPCIIVAIRRDDHILLARHNRHRNGIYTVLAGFVEVGETLEQAAAREIFEESRLQVKNLRYVTSQPWPFPHSLMMAFLADYAAGDLCHDPKELQEADWYRYDRLPQLPPVGTVARRLIEDTVALCRVQHE.

Arg69 lines the substrate pocket. Zn(2+)-binding residues include Cys98 and Cys101. Glu111 is a binding site for substrate. Residues Cys116 and Cys119 each contribute to the Zn(2+) site. Residue Tyr124 participates in substrate binding. The region spanning 125-248 (PQIAPCIIVA…TVARRLIEDT (124 aa)) is the Nudix hydrolase domain. A divalent metal cation contacts are provided by Ala158, Glu174, and Glu178. Positions 159 to 180 (GFVEVGETLEQAAAREIFEESR) match the Nudix box motif. Residue 192 to 199 (QPWPFPHS) participates in substrate binding. Glu219 is a binding site for a divalent metal cation. Residue Ala241 coordinates substrate.

It belongs to the Nudix hydrolase family. NudC subfamily. Homodimer. The cofactor is Mg(2+). Mn(2+) serves as cofactor. It depends on Zn(2+) as a cofactor.

It catalyses the reaction a 5'-end NAD(+)-phospho-ribonucleoside in mRNA + H2O = a 5'-end phospho-adenosine-phospho-ribonucleoside in mRNA + beta-nicotinamide D-ribonucleotide + 2 H(+). It carries out the reaction NAD(+) + H2O = beta-nicotinamide D-ribonucleotide + AMP + 2 H(+). The enzyme catalyses NADH + H2O = reduced beta-nicotinamide D-ribonucleotide + AMP + 2 H(+). In terms of biological role, mRNA decapping enzyme that specifically removes the nicotinamide adenine dinucleotide (NAD) cap from a subset of mRNAs by hydrolyzing the diphosphate linkage to produce nicotinamide mononucleotide (NMN) and 5' monophosphate mRNA. The NAD-cap is present at the 5'-end of some mRNAs and stabilizes RNA against 5'-processing. Has preference for mRNAs with a 5'-end purine. Catalyzes the hydrolysis of a broad range of dinucleotide pyrophosphates. This Edwardsiella ictaluri (strain 93-146) protein is NAD-capped RNA hydrolase NudC.